The primary structure comprises 146 residues: Ferredoxin-thioredoxin reductase catalytic chain, chloroplastic (146 aa).

A chloroplast-targeting transit peptide spans M1 to R31. C85 contributes to the [4Fe-4S] cluster binding site. Catalysis depends on C87, which acts as the Nucleophile. Cysteines 87 and 117 form a disulfide. [4Fe-4S] cluster is bound by residues C104, C106, and C115.

It belongs to the ferredoxin thioredoxin reductase beta subunit family. As to quaternary structure, heterodimer of subunit A (variable subunit) and subunit B (catalytic subunit). Heterodimeric FTR forms a complex with ferredoxin and thioredoxin. The cofactor is [4Fe-4S] cluster.

The protein resides in the plastid. The protein localises to the chloroplast. It catalyses the reaction [thioredoxin]-disulfide + 2 reduced [2Fe-2S]-[ferredoxin] + 2 H(+) = [thioredoxin]-dithiol + 2 oxidized [2Fe-2S]-[ferredoxin]. Catalytic subunit of the ferredoxin-thioredoxin reductase (FTR), which catalyzes the two-electron reduction of thioredoxins by the electrons provided by reduced ferredoxin. The polypeptide is Ferredoxin-thioredoxin reductase catalytic chain, chloroplastic (Arabidopsis thaliana (Mouse-ear cress)).